The sequence spans 511 residues: uncharacterized protein (511 aa).

Transmembrane regions (helical) follow at residues 7-27 (WVIS…NTAL), 46-66 (VNPI…GPLL), 80-100 (LPVF…ALMA), 107-127 (GAAT…SFPI), 134-154 (LLVL…LGTI), 163-183 (WLFF…YFFL), 200-220 (AGIL…IFLQ), 226-246 (SGYV…LLIV), 266-286 (VLGL…LSAF), 301-321 (LILL…LSAL), 329-349 (GMLG…WLHI), 357-377 (MFAA…AAGL), 394-414 (TAVQ…IGFF), and 437-457 (LFFI…CMNA). A disordered region spans residues 465-486 (AHKPHDKAKTAPEKPAVSAQGL).

This sequence belongs to the major facilitator superfamily.

It localises to the cell membrane. This is an uncharacterized protein from Bacillus subtilis (strain 168).